Consider the following 401-residue polypeptide: S-adenosylmethionine synthase (401 aa).

ATP is bound at residue H15. D17 contributes to the Mg(2+) binding site. Position 48 (E48) interacts with K(+). Residues E61 and Q104 each coordinate L-methionine. The interval 104–114 (QSPDIALGVDR) is flexible loop. Residues 179 to 181 (DGK), 246 to 247 (RF), D255, 261 to 262 (RK), A278, and K282 contribute to the ATP site. Residue D255 coordinates L-methionine. K286 contributes to the L-methionine binding site.

Belongs to the AdoMet synthase family. In terms of assembly, homotetramer; dimer of dimers. Requires Mg(2+) as cofactor. The cofactor is K(+).

Its subcellular location is the cytoplasm. It catalyses the reaction L-methionine + ATP + H2O = S-adenosyl-L-methionine + phosphate + diphosphate. It participates in amino-acid biosynthesis; S-adenosyl-L-methionine biosynthesis; S-adenosyl-L-methionine from L-methionine: step 1/1. Functionally, catalyzes the formation of S-adenosylmethionine (AdoMet) from methionine and ATP. The overall synthetic reaction is composed of two sequential steps, AdoMet formation and the subsequent tripolyphosphate hydrolysis which occurs prior to release of AdoMet from the enzyme. The polypeptide is S-adenosylmethionine synthase (Petrotoga mobilis (strain DSM 10674 / SJ95)).